A 549-amino-acid polypeptide reads, in one-letter code: Cation/acetate symporter ActP (549 aa).

The next 13 helical transmembrane spans lie at 33-53 (WQAI…TYWA), 77-97 (LAIA…ALVF), 103-123 (GLIY…LIAE), 148-168 (ILSA…QMVG), 183-203 (IAVV…GMLA), 206-226 (WVQI…AFMV), 262-282 (ISAL…PHIL), 303-323 (GFMG…IMLV), 355-375 (LFLG…VAGL), 404-424 (VSKI…VLFE), 428-448 (IAFM…PIIL), 464-484 (GGWL…TIWV), and 493-513 (IFPY…GIWF).

The protein belongs to the sodium:solute symporter (SSF) (TC 2.A.21) family.

It is found in the cell inner membrane. Functionally, transports acetate. The protein is Cation/acetate symporter ActP of Escherichia coli O8 (strain IAI1).